The following is a 339-amino-acid chain: Ketol-acid reductoisomerase (NADP(+)) (339 aa).

Residues 1–182 (MRVYYDRDAD…GGGRAGIIET (182 aa)) enclose the KARI N-terminal Rossmann domain. NADP(+) is bound by residues 24–27 (YGSQ), Arg-48, Ser-51, Thr-53, and 83–86 (DELQ). Residue His-108 is part of the active site. Position 134 (Gly-134) interacts with NADP(+). Positions 183–328 (SFKEECETDL…AKLRDMMPWI (146 aa)) constitute a KARI C-terminal knotted domain. Mg(2+) is bound by residues Asp-191, Glu-195, Glu-227, and Glu-231. Ser-252 is a substrate binding site.

The protein belongs to the ketol-acid reductoisomerase family. It depends on Mg(2+) as a cofactor.

The catalysed reaction is (2R)-2,3-dihydroxy-3-methylbutanoate + NADP(+) = (2S)-2-acetolactate + NADPH + H(+). It catalyses the reaction (2R,3R)-2,3-dihydroxy-3-methylpentanoate + NADP(+) = (S)-2-ethyl-2-hydroxy-3-oxobutanoate + NADPH + H(+). It functions in the pathway amino-acid biosynthesis; L-isoleucine biosynthesis; L-isoleucine from 2-oxobutanoate: step 2/4. Its pathway is amino-acid biosynthesis; L-valine biosynthesis; L-valine from pyruvate: step 2/4. Its function is as follows. Involved in the biosynthesis of branched-chain amino acids (BCAA). Catalyzes an alkyl-migration followed by a ketol-acid reduction of (S)-2-acetolactate (S2AL) to yield (R)-2,3-dihydroxy-isovalerate. In the isomerase reaction, S2AL is rearranged via a Mg-dependent methyl migration to produce 3-hydroxy-3-methyl-2-ketobutyrate (HMKB). In the reductase reaction, this 2-ketoacid undergoes a metal-dependent reduction by NADPH to yield (R)-2,3-dihydroxy-isovalerate. This is Ketol-acid reductoisomerase (NADP(+)) from Rhodopseudomonas palustris (strain HaA2).